A 674-amino-acid polypeptide reads, in one-letter code: E3 ubiquitin ligase Rnf157 (674 aa).

Residues 277-316 (CVVCLSDVRDTLILPCRHLCLCNACADTLRYQASNCPICR) form an RING-type zinc finger. 2 disordered regions span residues 376 to 404 (LTPS…GSDI) and 433 to 610 (QNSS…TGRE). Residues 469 to 508 (TPESENLTLSSSGAIDQSSCTGTPLSPTISSPEDPLSSSL) are compositionally biased toward polar residues. The span at 509–526 (AQSIMSMASSHSQQSQLS) shows a compositional bias: low complexity. The segment covering 527–537 (TDTVSSMSGSY) has biased composition (polar residues). Over residues 583-604 (EEMDAEGNVTEEEFASPEEDDG) the composition is skewed to acidic residues.

Its subcellular location is the cytoplasm. The catalysed reaction is S-ubiquitinyl-[E2 ubiquitin-conjugating enzyme]-L-cysteine + [acceptor protein]-L-lysine = [E2 ubiquitin-conjugating enzyme]-L-cysteine + N(6)-ubiquitinyl-[acceptor protein]-L-lysine.. Its function is as follows. E3 ubiquitin ligase that ubiquitinates apbb1 for its degradation by the proteasome and thus prevents apoptosis and promotes survival of neurons. Has a dual role in neurons as it is also required for dendrite growth and maintenance for which its ligase activity is not critical. May act as a scaffold molecule to regulate this process. Acts as a downstream effector of the interconnected PI3K and MAPK signaling pathways and thus participates in the regulation of the cell cycle. The sequence is that of E3 ubiquitin ligase Rnf157 (rnf157) from Xenopus laevis (African clawed frog).